The following is a 188-amino-acid chain: VQ motif-containing protein 18 (188 aa).

Disordered regions lie at residues 1-20 (MEITQYQSFHEGSSSRVSMN), 58-92 (LTGKPAPGEAKTGKKRAKSRITTPQEPVCDDHQPV), and 157-188 (GFIFNNNNNNNNNNNNNNNNNTNFDTKAHNSS). Residues 51-60 (FRSLVQSLTG) carry the VQ motif. The segment covering 161 to 179 (NNNNNNNNNNNNNNNNNTN) has biased composition (low complexity).

The protein resides in the nucleus. Its function is as follows. May function as positive regulator of plant growth. The chain is VQ motif-containing protein 18 from Arabidopsis thaliana (Mouse-ear cress).